Consider the following 92-residue polypeptide: Small ribosomal subunit protein bS20 (92 aa).

The disordered stretch occupies residues M1–L24.

This sequence belongs to the bacterial ribosomal protein bS20 family.

Its function is as follows. Binds directly to 16S ribosomal RNA. This Paraburkholderia xenovorans (strain LB400) protein is Small ribosomal subunit protein bS20.